The primary structure comprises 944 residues: MISALDSIPEPQNFAPSPDFKWLCEELFVKIHEVQINGTAGTGKSRSFKYYEIISNFVEMWRKTVGNNIYPALVLALPYRDRRIYNIKDYVLIRTICSYLKLPKNSATEQRLKDWKQRVGKGGNLSSLLVEEIAKRRAEPSSKAITIDNVNHYLDSLSGDRFASGRGFKSLVKSKPFLHCVENMSFVELKYFFDIVLKNRVIGGQEHKLLNCWHPDAQDYLSVISDLKVVTSKLYDPKVRLKDDDLSIKVGFAFAPQLAKKVNLSYEKICRTLHDDFLVEEKMDGERIQVHYMNYGESIKFFSRRGIDYTYLYGASLSSGTISQHLRFTDSVKECVLDGEMVTFDAKRRVILPFGLVKGSAKEALSFNSINNVDFHPLYMVFDLLYLNGTSLTPLPLHQRKQYLNSILSPLKNIVEIVRSSRCYGVESIKKSLEVAISLGSEGVVLKYYNSSYNVASRNNNWIKVKPEYLEEFGENLDLIVIGRDSGKKDSFMLGLLVLDEEEYKKHQGDSSEIVDHSSQEKHIQNSRRRVKKILSFCSIANGISQEEFKEIDRKTRGHWKRTSEVAPPASILEFGSKIPAEWIDPSESIVLEIKSRSLDNTETNMQKYATNCTLYGGYCKRIRYDKEWTDCYTLNDLYESRTVKSNPSYQAERSQLGLIRKKRKRVLISDSFHQNRKQLPISNIFAGLLFYVLSDYVTEDTGIRITRAELEKTIVEHGGKLIYNVILKRHSIGDVRLISCKTTTECKALIDRGYDILHPNWVLDCIAYKRLILIEPNYCFNVSQKMRAVAEKRVDCLGDSFENDISETKLSSLYKSQLSLPPMGELEIDSEVRRFPLFLFSNRIAYVPRRKISTEDDIIEMKIKLFGGKITDQQSLCNLIIIPYTDPILRKDCMNEVHEKIKEQIKASDTIPKIARVVAPEWVDHSINENCQVPEEDFPVVNY.

ATP contacts are provided by glutamate 280, lysine 282, arginine 287, glutamate 340, phenylalanine 382, glutamate 442, lysine 447, lysine 464, and lysine 466. The active-site N6-AMP-lysine intermediate is lysine 282. Residue glutamate 340 participates in Mg(2+) binding. Glutamate 442 is a binding site for Mg(2+). BRCT domains lie at 681–780 (PISN…PNYC) and 836–941 (FPLF…DFPV).

This sequence belongs to the ATP-dependent DNA ligase family. In terms of assembly, component of the DNA ligase IV complex, composed of DNL4, LIF1 and NEJ1. Interacts (via BRCT domain) with LIF1. Interacts with NEJ1. Interacts with POL4 in the DNL4-LIF1 complex. Mg(2+) is required as a cofactor.

The protein localises to the nucleus. It catalyses the reaction ATP + (deoxyribonucleotide)n-3'-hydroxyl + 5'-phospho-(deoxyribonucleotide)m = (deoxyribonucleotide)n+m + AMP + diphosphate.. In terms of biological role, DNA ligase involved in DNA non-homologous end joining (NHEJ); required for double-strand break (DSB) repair. This chain is DNA ligase 4 (DNL4), found in Saccharomyces cerevisiae (strain ATCC 204508 / S288c) (Baker's yeast).